Here is a 243-residue protein sequence, read N- to C-terminus: HTH-type quorum sensing-dependent transcriptional regulator RpaR (243 aa).

Residues 174-239 (KPIRRNRLTP…AAVAKALTLG (66 aa)) form the HTH luxR-type domain. The H-T-H motif DNA-binding region spans 198–217 (AWEISVILCITERTVKFHLI).

The protein belongs to the autoinducer-regulated transcriptional regulatory protein family.

Its function is as follows. Responds to the quorum-sensing autoinducer 4-coumaroyl-homoserine lactone to regulate expression of several genes. Represses expression of rpaI in the absence of the inducer. The polypeptide is HTH-type quorum sensing-dependent transcriptional regulator RpaR (Rhodopseudomonas palustris (strain ATCC BAA-98 / CGA009)).